Reading from the N-terminus, the 616-residue chain is Chaperone protein HscA (616 aa).

The protein belongs to the heat shock protein 70 family.

In terms of biological role, chaperone involved in the maturation of iron-sulfur cluster-containing proteins. Has a low intrinsic ATPase activity which is markedly stimulated by HscB. Involved in the maturation of IscU. In Klebsiella pneumoniae (strain 342), this protein is Chaperone protein HscA.